We begin with the raw amino-acid sequence, 501 residues long: Histidine--tRNA ligase (501 aa).

This sequence belongs to the class-II aminoacyl-tRNA synthetase family. Homodimer.

Its subcellular location is the cytoplasm. It carries out the reaction tRNA(His) + L-histidine + ATP = L-histidyl-tRNA(His) + AMP + diphosphate + H(+). The sequence is that of Histidine--tRNA ligase from Methylocella silvestris (strain DSM 15510 / CIP 108128 / LMG 27833 / NCIMB 13906 / BL2).